The primary structure comprises 423 residues: Cyclin-dependent kinase 14 (423 aa).

Serine 32, serine 49, and serine 88 each carry phosphoserine. The span at serine 49–lysine 64 shows a compositional bias: polar residues. Residues serine 49 to aspartate 87 are disordered. The region spanning tyrosine 89–phenylalanine 373 is the Protein kinase domain. Residues leucine 95–valine 103 and lysine 118 contribute to the ATP site. Aspartate 210 functions as the Proton acceptor in the catalytic mechanism. A disordered region spans residues glutamate 403–histidine 423. Polar residues predominate over residues lysine 410–histidine 423.

It belongs to the protein kinase superfamily. CMGC Ser/Thr protein kinase family. CDC2/CDKX subfamily. Found in a complex with LRP6, CCNY and CAPRIN2 during G2/M stage; CAPRIN2 functions as a scaffold for the complex by binding to CCNY via its N terminus and to CDK14 via its C terminus. Interacts with CCNY; CCNY mediates its recruitment to the plasma membrane and promotes phosphorylation of LRP6. Interacts with CCDN3 and CDKN1A. Interacts with SEPT8. Interacts with 14-3-3 proteina YWHAB, YWHAE, YWHAH and YWHAQ.

It localises to the cell membrane. The protein resides in the cytoplasm. The protein localises to the nucleus. It carries out the reaction L-seryl-[protein] + ATP = O-phospho-L-seryl-[protein] + ADP + H(+). It catalyses the reaction L-threonyl-[protein] + ATP = O-phospho-L-threonyl-[protein] + ADP + H(+). Serine/threonine-protein kinase activity is promoted by associated cyclins CCDN3 and CCNY and repressed by CDKN1A. In terms of biological role, serine/threonine-protein kinase involved in the control of the eukaryotic cell cycle, whose activity is controlled by an associated cyclin. Acts as a cell-cycle regulator of Wnt signaling pathway during G2/M phase by mediating the phosphorylation of LRP6 at 'Ser-1490', leading to the activation of the Wnt signaling pathway. Acts as a regulator of cell cycle progression and cell proliferation via its interaction with CCDN3. Phosphorylates RB1 in vitro, however the relevance of such result remains to be confirmed in vivo. May also play a role in meiosis, neuron differentiation and may indirectly act as a negative regulator of insulin-responsive glucose transport. This is Cyclin-dependent kinase 14 (CDK14) from Callithrix jacchus (White-tufted-ear marmoset).